Consider the following 37-residue polypeptide: Large ribosomal subunit protein bL36c (37 aa).

The protein belongs to the bacterial ribosomal protein bL36 family.

The protein resides in the plastid. It localises to the chloroplast. This is Large ribosomal subunit protein bL36c from Piper cenocladum (Ant piper).